The following is an 823-amino-acid chain: Adhesion G protein-coupled receptor E2 (823 aa).

The signal sequence occupies residues 1–23 (MGGRVFLVFLAFCVWLTLPGAET). Residues 24-540 (QDSRGCARWC…EEDPVLTVIT (517 aa)) are Extracellular-facing. Residues 25–66 (DSRGCARWCPQDSSCVNATACRCNPGFSSFSEIITTPMETCD) enclose the EGF-like 1 domain. Intrachain disulfides connect cysteine 29–cysteine 39, cysteine 33–cysteine 45, cysteine 47–cysteine 65, cysteine 71–cysteine 85, cysteine 79–cysteine 94, cysteine 96–cysteine 117, cysteine 123–cysteine 136, cysteine 130–cysteine 145, cysteine 147–cysteine 161, cysteine 167–cysteine 180, cysteine 174–cysteine 189, cysteine 191–cysteine 210, cysteine 216–cysteine 229, cysteine 223–cysteine 238, and cysteine 240–cysteine 259. The N-linked (GlcNAc...) asparagine glycan is linked to asparagine 41. In terms of domain architecture, EGF-like 2; calcium-binding spans 67–118 (DINECATLSKVSCGKFSDCWNTEGSYDCVCSPGYEPVSGAKTFKNESENTCQ). Asparagine 111 carries N-linked (GlcNAc...) asparagine glycosylation. In terms of domain architecture, EGF-like 3; calcium-binding spans 119–162 (DVDECQQNPRLCKSYGTCVNTLGSYTCQCLPGFKLKPEDPKLCT). The region spanning 163–211 (DVNECTSGQNPCHSSTHCLNNVGSYQCRCRPGWQPIPGSPNGPNNTVCE) is the EGF-like 4; calcium-binding domain. Asparagine 206 is a glycosylation site (N-linked (GlcNAc...) asparagine). The 49-residue stretch at 212 to 260 (DVDECSSGQHQCDSSTVCFNTVGSYSCRCRPGWKPRHGIPNNQKDTVCE) folds into the EGF-like 5; calcium-binding domain. 5 N-linked (GlcNAc...) asparagine glycosylation sites follow: asparagine 298, asparagine 347, asparagine 354, asparagine 456, and asparagine 460. The GAIN-B domain maps to 354-530 (NFSYPAGTEL…AVLMAHYDVQ (177 aa)). Cystine bridges form between cysteine 482-cysteine 512 and cysteine 500-cysteine 514. A GPS region spans residues 482 to 530 (CVFWEHGQNGCGHWATTGCSTIGTRDTSTICRCTHLSSFAVLMAHYDVQ). Residues 541 to 561 (YMGLSVSLLCLLLAALTFLLC) form a helical membrane-spanning segment. Topologically, residues 562 to 569 (KAIQNTST) are cytoplasmic. Residues 570-590 (SLHLQLSLCLFLAHLLFLVAI) traverse the membrane as a helical segment. Over 591-605 (DQTGHKVLCSIIAGT) the chain is Extracellular. The chain crosses the membrane as a helical span at residues 606–626 (LHYLYLATLTWMLLEALYLFL). Residues 627-644 (TARNLTVVNYSSINRFMK) are Cytoplasmic-facing. Residues 645–665 (KLMFPVGYGVPAVTVAISAAS) form a helical membrane-spanning segment. Residues 666–683 (RPHLYGTPSRCWLQPEKG) lie on the Extracellular side of the membrane. The chain crosses the membrane as a helical span at residues 684-704 (FIWGFLGPVCAIFSVNLVLFL). Topologically, residues 705–735 (VTLWILKNRLSSLNSEVSTLRNTRMLAFKAT) are cytoplasmic. The helical transmembrane segment at 736–756 (AQLFILGCTWCLGILQVGPAA) threads the bilayer. The Extracellular portion of the chain corresponds to 757 to 760 (RVMA). The helical transmembrane segment at 761-781 (YLFTIINSLQGVFIFLVYCLL) threads the bilayer. The Cytoplasmic segment spans residues 782-823 (SQQVREQYGKWSKGIRKLKTESEMHTLSSSAKADTSKPSTVN).

The protein belongs to the G-protein coupled receptor 2 family. Adhesion G-protein coupled receptor (ADGR) subfamily. Forms a heterodimer, consisting of a large extracellular region non-covalently linked to a seven-transmembrane moiety. Interacts with chondroitin sulfate; the interaction with chondroitin sulfate is calcium-dependent. Interacts with CD55. Autoproteolytically cleaved into 2 subunits, an extracellular alpha subunit and a seven-transmembrane beta subunit. As to expression, expression is restricted to myeloid cells. Highest expression was found in peripheral blood leukocytes, followed by spleen and lymph nodes, with intermediate to low levels in thymus, bone marrow, fetal liver, placenta, and lung, and no expression in heart, brain, skeletal muscle, kidney, or pancreas. Expression is also detected in monocyte/macrophage and Jurkat cell lines but not in other cell lines tested. High expression in mast cells.

It is found in the cell membrane. The protein localises to the cell projection. The protein resides in the ruffle membrane. In terms of biological role, cell surface receptor that binds to the chondroitin sulfate moiety of glycosaminoglycan chains and promotes cell attachment. Promotes granulocyte chemotaxis, degranulation and adhesion. In macrophages, promotes the release of inflammatory cytokines, including IL8 and TNF. Signals probably through G-proteins. Is a regulator of mast cell degranulation. The polypeptide is Adhesion G protein-coupled receptor E2 (Homo sapiens (Human)).